A 227-amino-acid chain; its full sequence is Zinc finger protein 511 (227 aa).

C2H2-type zinc fingers lie at residues 80 to 105, 107 to 130, and 144 to 169; these read FTCQ…HMMH, NTCS…LEWH, and YQCL…VRLH. The tract at residues 180 to 204 is disordered; the sequence is PKTNRGPAMPAAADAATRAPTDDSD. Residues 186–198 show a composition bias toward low complexity; sequence PAMPAAADAATRA.

The protein belongs to the krueppel C2H2-type zinc-finger protein family.

Its subcellular location is the nucleus. Its function is as follows. May be involved in transcriptional regulation. The sequence is that of Zinc finger protein 511 (Znf511) from Mus musculus (Mouse).